The sequence spans 1106 residues: Probable NAD-specific glutamate dehydrogenase (1106 aa).

The active site involves Lys-654.

Belongs to the Glu/Leu/Phe/Val dehydrogenases family. Homotetramer.

The protein resides in the cytoplasm. It carries out the reaction L-glutamate + NAD(+) + H2O = 2-oxoglutarate + NH4(+) + NADH + H(+). NAD(+)-dependent glutamate dehydrogenase which degrades glutamate to ammonia and alpha-ketoglutarate. The sequence is that of Probable NAD-specific glutamate dehydrogenase (gdh2) from Schizosaccharomyces pombe (strain 972 / ATCC 24843) (Fission yeast).